Reading from the N-terminus, the 352-residue chain is MSGNTFGKIFTVTTCGESHGDSLAAIIDGCPSNIPLCEADIQLELDRRKPGQSKFTTQRKEPDEVKIISGVFEGKTTGTPIGLIIKNQDQKSKDYSEIKDKFRPGHADYTYFKKYGIRDYRGGGRSSARETAMRVAAGAIAKKILKHYGIEIYGFCSQIGSLKIDFIDKDFINQNPFFIANKNAVPACEDLIHSIRKQGDSIGAEVTVVATGLEAGLGRPVFDRLDASIAYAMMSINAVKAVSIGDGFDCVAQKGSQHRDEITQQQGFLSNHAGGILGGISTGQDIIAKLAFKPTSSILQPGKSIDVQGNDTTVITKGRHDPCVGIRGVPIAEAMLALVLVDELLITRSYRD.

Arginine 48 contributes to the NADP(+) binding site. FMN-binding positions include 125 to 127 (RSS), 237 to 238 (NA), glycine 278, 293 to 297 (KPTSS), and arginine 319.

This sequence belongs to the chorismate synthase family. In terms of assembly, homotetramer. FMNH2 is required as a cofactor.

The enzyme catalyses 5-O-(1-carboxyvinyl)-3-phosphoshikimate = chorismate + phosphate. Its pathway is metabolic intermediate biosynthesis; chorismate biosynthesis; chorismate from D-erythrose 4-phosphate and phosphoenolpyruvate: step 7/7. Catalyzes the anti-1,4-elimination of the C-3 phosphate and the C-6 proR hydrogen from 5-enolpyruvylshikimate-3-phosphate (EPSP) to yield chorismate, which is the branch point compound that serves as the starting substrate for the three terminal pathways of aromatic amino acid biosynthesis. This reaction introduces a second double bond into the aromatic ring system. The sequence is that of Chorismate synthase from Francisella tularensis subsp. tularensis (strain FSC 198).